A 151-amino-acid chain; its full sequence is uncharacterized protein (151 aa).

A coiled-coil region spans residues 35–147; that stretch reads GIFENERQKL…RETLQESLED (113 aa).

This is an uncharacterized protein from Helicobacter hepaticus (strain ATCC 51449 / 3B1).